A 676-amino-acid chain; its full sequence is SPARC-like protein 1 (676 aa).

The first 16 residues, 1-16 (MKTVLLLICLLGSAFT), serve as a signal peptide directing secretion. Residues 35–44 (EKHKYTHSEM) show a composition bias toward basic and acidic residues. Disordered stretches follow at residues 35 to 151 (EKHK…WALR), 173 to 369 (NTVG…GVYR), and 385 to 437 (SEDN…RNST). Positions 95 to 108 (KNSLRSINFLTLHS) are enriched in polar residues. The N-linked (GlcNAc...) asparagine glycan is linked to asparagine 182. The segment covering 184-202 (SEEEEAGEEEDEEWGEETD) has biased composition (acidic residues). 2 stretches are compositionally biased toward basic and acidic residues: residues 249 to 266 (EKFS…KEGK) and 273 to 291 (NHNE…KEHF). The segment covering 312–328 (NAEEDDNDSGDDGEEDL) has biased composition (acidic residues). N-linked (GlcNAc...) asparagine glycosylation is present at asparagine 318. The segment covering 385 to 394 (SEDNHYHHEP) has biased composition (basic and acidic residues). Asparagine 396 carries N-linked (GlcNAc...) asparagine glycosylation. A compositionally biased stretch (low complexity) spans 397-408 (SSSKQQLQTSSS). Asparagine 413 carries an N-linked (GlcNAc...) asparagine glycan. Residues 415 to 433 (TEHEDEVKTTGGSYHEESA) are compositionally biased toward basic and acidic residues. The N-linked (GlcNAc...) asparagine glycan is linked to asparagine 435. Residues 444-466 (LCRNFHCKRGKVCQADKQGKPSC) form the Follistatin-like domain. Disulfide bonds link cysteine 445/cysteine 456, cysteine 450/cysteine 466, cysteine 468/cysteine 502, cysteine 474/cysteine 495, cysteine 484/cysteine 521, cysteine 527/cysteine 638, and cysteine 646/cysteine 662. A Kazal-like domain is found at 462–523 (GKPSCICQDP…HLDYMGACKH (62 aa)). N-linked (GlcNAc...) asparagine glycosylation occurs at asparagine 488. The EF-hand domain occupies 634-669 (PMEHCITRFFQECDGDQDKLITLKEWCHCFAIKEED). Ca(2+) contacts are provided by aspartate 647, aspartate 649, aspartate 651, and glutamate 658.

Belongs to the SPARC family. As to expression, glial (Mueller) cells of the neuroretina.

It localises to the secreted. The protein resides in the extracellular space. The protein localises to the extracellular matrix. Could play a role in the late stage of neuroretina morphogenesis. The polypeptide is SPARC-like protein 1 (SPARCL1) (Coturnix japonica (Japanese quail)).